Consider the following 296-residue polypeptide: Pre-mRNA-splicing factor CWC23 (296 aa).

Residues 14-86 (DLYKLLELNY…AKKAEYDQWV (73 aa)) form the J domain.

This sequence belongs to the DnaJ family. As to quaternary structure, associated with the spliceosome.

Its subcellular location is the cytoplasm. The protein localises to the nucleus. Its function is as follows. Involved in pre-mRNA splicing. May be involved in endoplasmic reticulum-associated protein degradation (ERAD) and required for growth at low and high temperatures. This is Pre-mRNA-splicing factor CWC23 (CWC23) from Candida glabrata (strain ATCC 2001 / BCRC 20586 / JCM 3761 / NBRC 0622 / NRRL Y-65 / CBS 138) (Yeast).